Consider the following 870-residue polypeptide: Glycerol-3-phosphate acyltransferase (870 aa).

Positions 1–27 (MPKKNSPLLPKETTPTQSSVDTSGSSN) are disordered. Over residues 13 to 27 (TTPTQSSVDTSGSSN) the composition is skewed to polar residues. An HXXXXD motif motif is present at residues 351–356 (HRSHID).

The protein belongs to the GPAT/DAPAT family.

Its subcellular location is the cell inner membrane. The enzyme catalyses sn-glycerol 3-phosphate + an acyl-CoA = a 1-acyl-sn-glycero-3-phosphate + CoA. The protein operates within phospholipid metabolism; CDP-diacylglycerol biosynthesis; CDP-diacylglycerol from sn-glycerol 3-phosphate: step 1/3. The protein is Glycerol-3-phosphate acyltransferase (plsB) of Xylella fastidiosa (strain 9a5c).